The following is a 130-amino-acid chain: Large ribosomal subunit protein bL17 (130 aa).

Belongs to the bacterial ribosomal protein bL17 family. In terms of assembly, part of the 50S ribosomal subunit. Contacts protein L32.

The sequence is that of Large ribosomal subunit protein bL17 from Azotobacter vinelandii (strain DJ / ATCC BAA-1303).